Consider the following 318-residue polypeptide: uncharacterized protein (318 aa).

Positions 67–157 (LAFDELEKEK…SLKAIQTSQE (91 aa)) form a coiled coil. The interval 172 to 318 (ESTNKVEKNA…KGFFARLFNL (147 aa)) is disordered. 2 stretches are compositionally biased toward basic and acidic residues: residues 175 to 193 (NKVEKNAVTEDKADSKDSK) and 219 to 236 (KVDKEDQISATEAIEKAS). Polar residues predominate over residues 237-248 (VEQSKNENAAET). 2 stretches are compositionally biased toward basic and acidic residues: residues 249 to 274 (SNKEATVDADAQHDAEQQVAEAHAEA) and 300 to 310 (SEPKPQEEKKG).

This is an uncharacterized protein from Staphylococcus aureus (strain Mu50 / ATCC 700699).